We begin with the raw amino-acid sequence, 867 residues long: MDLNTLPFHSINSVNVSSAPTVNERSYPFLLDASAGVSGFNPVVSSPEKKARMKYKKNSTSPNMDVKSRKKVSRACDFCRQKKIRCDMDQSPRPGNACINCRKHHLDCNFTRTPLKRGPAKGFNRNADEKQKRASGSAKSSSPAVNGSVFSGNEASPSSRAPSITPVDSVNTTTSAIQVPSVTLTAPAPLGVDQKISQDQKPDSWLTYNAQFAQNSPQLAPSIPSPMKLSPANQQAMPPYPQMLGPGSISSYTNSNLGPSAGFRPPTFFSSPSPQPYSGPILASTAPTLDGSYLSNPSNSNPAVMSLSSNFPSPPKPNNPVYLPPRGNPTVNDRVSNVLPSITSFDSSVTTVPSNSPATLNSYTTSVPSGMSRHPMLMNPSTPEPSLGVNSPSLRPLQSLNNVQNSYRVASTQAPPPHPLRNYTSDAESISMRSKSTQASDAATFREVEQLYQENVEWDDAAIDRYYLLIHSTLPILHHSKARLKSELEKAPINLRSSCLHAIYSLVNRPPFATLGHVFHNTPMKAIGLLNLICSNVQDLSNRILHLQTMILLAIESDQRGPTTITGRNGLPQGMWLGAAIGLACNMRLHIQSHLSLQSINEDMDSDEALCRRAWWVLVVLDRWHSMSTCSPLFLPETFINLTIQDQKLLGTFPSQLVRLSLIVGHISDVFQSPDPTDRQSPIVTQQLRSEIDAFRQSVDVVWGQMNLLTLAVTHVKVLLELCINARPSTVLVPAMKMATILSSSSTPMTPLNHHFFSLATCVLIGVFDLPELQNEARRGLEHIRECIEKRRDIVSREDHEDWDYIVLKLINAKMQGMPINSDPSIPPHVPPSSAFAYSNQEMDSATFKDAYLYTRLCNLGYLGFLI.

Residues 76-108 (CDFCRQKKIRCDMDQSPRPGNACINCRKHHLDC) constitute a DNA-binding region (zn(2)-C6 fungal-type). Disordered stretches follow at residues 110-167 (FTRT…ITPV) and 217-257 (PQLA…NSNL). Composition is skewed to polar residues over residues 137-167 (SAKS…ITPV) and 248-257 (SISSYTNSNL).

Its subcellular location is the nucleus. This is an uncharacterized protein from Schizosaccharomyces pombe (strain 972 / ATCC 24843) (Fission yeast).